The primary structure comprises 94 residues: Beta-defensin 132 (94 aa).

An N-terminal signal peptide occupies residues 1–22 (MKFLLLVLAALGFLTQVIPASA). Intrachain disulfides connect C27–C55 and C39–C56. The disordered stretch occupies residues 72-94 (GNHWQSRRNTQRKDKKQQTTVTS). Basic residues predominate over residues 76-86 (QSRRNTQRKDK).

It belongs to the beta-defensin family.

It is found in the secreted. Has antibacterial activity. The chain is Beta-defensin 132 (DEFB132) from Gorilla gorilla gorilla (Western lowland gorilla).